A 249-amino-acid polypeptide reads, in one-letter code: Indole-3-glycerol phosphate synthase (249 aa).

It belongs to the TrpC family.

It catalyses the reaction 1-(2-carboxyphenylamino)-1-deoxy-D-ribulose 5-phosphate + H(+) = (1S,2R)-1-C-(indol-3-yl)glycerol 3-phosphate + CO2 + H2O. It functions in the pathway amino-acid biosynthesis; L-tryptophan biosynthesis; L-tryptophan from chorismate: step 4/5. This is Indole-3-glycerol phosphate synthase from Pyrobaculum neutrophilum (strain DSM 2338 / JCM 9278 / NBRC 100436 / V24Sta) (Thermoproteus neutrophilus).